Reading from the N-terminus, the 434-residue chain is Trigger factor (434 aa).

A PPIase FKBP-type domain is found at Gly-161 to Pro-246.

The protein belongs to the FKBP-type PPIase family. Tig subfamily.

The protein resides in the cytoplasm. The catalysed reaction is [protein]-peptidylproline (omega=180) = [protein]-peptidylproline (omega=0). In terms of biological role, involved in protein export. Acts as a chaperone by maintaining the newly synthesized protein in an open conformation. Functions as a peptidyl-prolyl cis-trans isomerase. The chain is Trigger factor from Vibrio parahaemolyticus serotype O3:K6 (strain RIMD 2210633).